Here is a 117-residue protein sequence, read N- to C-terminus: Ribosome-binding factor A (117 aa).

It belongs to the RbfA family. Monomer. Binds 30S ribosomal subunits, but not 50S ribosomal subunits or 70S ribosomes.

The protein localises to the cytoplasm. In terms of biological role, one of several proteins that assist in the late maturation steps of the functional core of the 30S ribosomal subunit. Associates with free 30S ribosomal subunits (but not with 30S subunits that are part of 70S ribosomes or polysomes). Required for efficient processing of 16S rRNA. May interact with the 5'-terminal helix region of 16S rRNA. This Petrotoga mobilis (strain DSM 10674 / SJ95) protein is Ribosome-binding factor A.